The chain runs to 142 residues: Large ribosomal subunit protein uL11 (142 aa).

Belongs to the universal ribosomal protein uL11 family. As to quaternary structure, part of the ribosomal stalk of the 50S ribosomal subunit. Interacts with L10 and the large rRNA to form the base of the stalk. L10 forms an elongated spine to which L12 dimers bind in a sequential fashion forming a multimeric L10(L12)X complex. In terms of processing, one or more lysine residues are methylated.

In terms of biological role, forms part of the ribosomal stalk which helps the ribosome interact with GTP-bound translation factors. The chain is Large ribosomal subunit protein uL11 from Photobacterium profundum (strain SS9).